Reading from the N-terminus, the 245-residue chain is Collagen triple helix repeat-containing protein 1 (245 aa).

Positions Met1 to Ala32 are cleaved as a signal peptide. A Collagen-like domain is found at Gln59–Lys92. A disordered region spans residues Val64–Gly87. Asn188 carries an N-linked (GlcNAc...) asparagine glycan.

N-glycosylated.

The protein resides in the secreted. The protein localises to the extracellular space. It localises to the extracellular matrix. In terms of biological role, may act as a negative regulator of collagen matrix deposition. In Mus musculus (Mouse), this protein is Collagen triple helix repeat-containing protein 1 (Cthrc1).